The primary structure comprises 327 residues: Interleukin-12 subunit beta (327 aa).

An N-terminal signal peptide occupies residues 1 to 22; that stretch reads MHPQQLVVSWFSLVLLASPIVA. Residues 23-106 enclose the Ig-like C2-type domain; that stretch reads IWELEKNVYI…LSRSLLLLHK (84 aa). The cysteines at positions 50 and 90 are disulfide-linked. A glycan (N-linked (GlcNAc...) asparagine) is linked at Asn223. In terms of domain architecture, Fibronectin type-III spans 238–327; it reads PPKNLQLRPL…WSEWASVSCS (90 aa).

Belongs to the IL-12B family. Heterodimer with IL12A; disulfide-linked. The heterodimer is known as interleukin IL-12. Heterodimer with IL23A; disulfide-linked. The heterodimer is known as interleukin IL-23. Also secreted as a monomer. Interacts with NBR1; this interaction promotes IL-12 secretion.

The protein resides in the secreted. Functionally, cytokine that can act as a growth factor for activated T and NK cells, enhance the lytic activity of NK/lymphokine-activated killer cells, and stimulate the production of IFN-gamma by resting PBMC. The protein is Interleukin-12 subunit beta (IL12B) of Bubalus carabanensis (Swamp type water buffalo).